The chain runs to 594 residues: Golgi-associated RAB2 interactor protein 4 (594 aa).

Positions 387–524 (MDAAAGPPVS…TSSGSSKGLG (138 aa)) are disordered. Over residues 396-406 (STRQSKSSLSG) the composition is skewed to polar residues. Basic and acidic residues-rich tracts occupy residues 408-433 (HGRE…DRAL), 442-455 (TGES…DKIA), and 468-477 (ANRDDKKEKG). A compositionally biased stretch (polar residues) spans 511 to 520 (SLWTTSSGSS).

Belongs to the GARIN family. As to quaternary structure, interacts (via N-terminus) with RAB2B (in GTP-bound form).

Its subcellular location is the golgi apparatus. Functionally, RAB2B effector protein required for the compacted Golgi morphology, probably through interaction with small GTPase RAB2B. The sequence is that of Golgi-associated RAB2 interactor protein 4 from Homo sapiens (Human).